Consider the following 92-residue polypeptide: Small ribosomal subunit protein uS19 (92 aa).

It belongs to the universal ribosomal protein uS19 family.

Functionally, protein S19 forms a complex with S13 that binds strongly to the 16S ribosomal RNA. In Bradyrhizobium diazoefficiens (strain JCM 10833 / BCRC 13528 / IAM 13628 / NBRC 14792 / USDA 110), this protein is Small ribosomal subunit protein uS19.